A 391-amino-acid polypeptide reads, in one-letter code: Phosphoglycerate kinase (391 aa).

Substrate is bound by residues 21 to 23 (DLN), Arg-36, 59 to 62 (HLGR), Arg-113, and Arg-146. Residues Lys-197, Glu-319, and 345–348 (GGDT) contribute to the ATP site.

This sequence belongs to the phosphoglycerate kinase family. Monomer.

The protein localises to the cytoplasm. The catalysed reaction is (2R)-3-phosphoglycerate + ATP = (2R)-3-phospho-glyceroyl phosphate + ADP. The protein operates within carbohydrate degradation; glycolysis; pyruvate from D-glyceraldehyde 3-phosphate: step 2/5. The sequence is that of Phosphoglycerate kinase from Shewanella halifaxensis (strain HAW-EB4).